A 166-amino-acid chain; its full sequence is SKPSKSGKGKDDLRNEIDKLWREVNSLKEMQALQTVCLKGTKIHKKCYLASRGSKSYHAANEDCIAQGGTLSIPRSSDEGNSLRSYAKKSLVGARDFWIGVNDMTTEGKFVDVNGLPITYFNWDRSKPVGGTRENCVAASTSGQGKWSDDVCRSEKRYICEYLIPV.

3 disulfide bridges follow: cysteine 37–cysteine 47, cysteine 64–cysteine 160, and cysteine 136–cysteine 152. The 119-residue stretch at 43 to 161 (IHKKCYLASR…CRSEKRYICE (119 aa)) folds into the C-type lectin domain.

The chain is Tetranectin-like protein from Carcharhinus perezii (Reef shark).